Consider the following 536-residue polypeptide: Fanconi anemia group E protein (536 aa).

The interaction with FANCC stretch occupies residues 150–371 (MEGASPLSER…VLTRSLFLGR (222 aa)). A disordered region spans residues 171-252 (LGLGGRRLKS…ADGGSASPIK (82 aa)). A compositionally biased stretch (basic and acidic residues) spans 230 to 239 (EKERPEHKSL). Ser249 carries the phosphoserine modification. Residue Thr346 is modified to Phosphothreonine; by CHEK1. Ser374 carries the phosphoserine; by CHEK1 modification.

Belongs to the multisubunit FA complex composed of FANCA, FANCB, FANCC, FANCE, FANCF, FANCG, FANCL/PHF9 and FANCM. The complex is not found in FA patients. Interacts with FANCC and FANCD2. Phosphorylated. Phosphorylation by CHEK1 at Thr-346 and Ser-374 regulates its function in DNA cross-links repair. Post-translationally, ubiquitinated. Phosphorylation by CHEK1 induces polyubiquitination and degradation.

It is found in the nucleus. In terms of biological role, as part of the Fanconi anemia (FA) complex functions in DNA cross-links repair. Required for the nuclear accumulation of FANCC and provides a critical bridge between the FA complex and FANCD2. The sequence is that of Fanconi anemia group E protein (FANCE) from Homo sapiens (Human).